We begin with the raw amino-acid sequence, 1049 residues long: MVREKAQVTMGSTTMDMLEDEVVKAQDRRWRLRLRNPWACSAYTLVTTALGFAAFFLMLQSFLTKQLDTKGCEMVYMRPMYSKFDDFDTEHTRFASKYSLYLYREWGIDEEFTVKGAPVLFIPGNAGSYKQVRSLAAESAYHYHNSVQHESNAGKGERRPLDFFAVDFNEDFTAFHGQTVLDQAEYLNDAITFILSLYHTPGRSRRDPHLPDPTSVIIVGHSMGGVVARTLFTMPNYQANSINTIVTIAAPHARPPVSFDGDIVRTQNAVNSYWRSAYAQDSAKDNPLQHVTLVSIAGGGLDNIVSSDYASIASIVPETHGFTVFSSSIPNCWTGADHLAITWCDQVRKSIVRALYDVVDVSQAMQTLPVTNRMRFFKKWFLTGLEDIAEKTLPMTTEATLLTVDVDTAILPQEEQLVLRSLGRSSPNIKAFLLPVPPRDRGEKIFTLLTNERLDGPGEHGRLEVLFCSMSSAQSTQSYLTHLDFAGESPTATKLACKNAASDVIILPESTSHSNFPFRPDQAPFSYLQYDVRDLAQHQFVAVLDKVAHHSAGWVVAAFSASSEATVKVNPSLQRLLYTGISLQLPPRRPLTTEISIPALHSSLLAYDVHISRQKCSQGELFAPLLRQYISDLYESKFFVNVEDAMINVHGRGRPTCRAALSSKSPSNGLSLQIWADPTCDSSIDVTLKVDFLGSLGKLWMRYRIVFAAFPLLVVALVLCQQFRTYDATGVFISFAQSLNECMYSSLPLAITALTFLSITLATAQMQSKKLQALGGPASIIGAFFDNDNELLLGSEDPFFWFLVPLFGIMCTAICVMVNYVVLILTYLFATLYALVRSNRLLDASGQRTPDAFAVTSTRRRIINTLILLSLISTAIPYHFAYVVLCIVQLATCIRGFRLAKEAQLDTNYNFYNYAHSIFILMLWILPINLPVLVVWIRNLAIQWLTPFSSHHNVLSITPFILLVETLSTGRMVPRVRPGISLFTNVFLFAIGAYAAVYGVTYAYVLHHLANILCAWLVAIHFDTLGLAFEDSSKGVAVVGGRSEGKKRP.

The helical transmembrane segment at 39 to 59 (ACSAYTLVTTALGFAAFFLML) threads the bilayer. The active site involves Ser222. The next 8 membrane-spanning stretches (helical) occupy residues 699-719 (LWMR…ALVL), 742-762 (CMYS…ITLA), 798-818 (PFFW…CVMV), 867-887 (ILLS…VLCI), 917-937 (SIFI…VVWI), 944-964 (WLTP…ILLV), 986-1006 (VFLF…AYVL), and 1009-1029 (LANI…GLAF).

This sequence belongs to the GPI inositol-deacylase family.

It is found in the endoplasmic reticulum membrane. Functionally, involved in inositol deacylation of GPI-anchored proteins which plays important roles in the quality control and ER-associated degradation of GPI-anchored proteins. The chain is GPI inositol-deacylase (BST1) from Phaeosphaeria nodorum (strain SN15 / ATCC MYA-4574 / FGSC 10173) (Glume blotch fungus).